A 209-amino-acid chain; its full sequence is Outer-membrane lipoprotein carrier protein (209 aa).

The N-terminal stretch at 1–21 is a signal peptide; that stretch reads MHRQLRYAVLATALFASTAFA.

Belongs to the LolA family. Monomer.

Its subcellular location is the periplasm. Functionally, participates in the translocation of lipoproteins from the inner membrane to the outer membrane. Only forms a complex with a lipoprotein if the residue after the N-terminal Cys is not an aspartate (The Asp acts as a targeting signal to indicate that the lipoprotein should stay in the inner membrane). The sequence is that of Outer-membrane lipoprotein carrier protein from Xanthomonas oryzae pv. oryzae (strain MAFF 311018).